Consider the following 484-residue polypeptide: Toluene efflux pump outer membrane protein TtgC (484 aa).

The first 17 residues, 1–17 (MTKSLLSLAVTAFILGG), serve as a signal peptide directing secretion. The N-palmitoyl cysteine moiety is linked to residue C18. C18 carries S-diacylglycerol cysteine lipidation.

It belongs to the outer membrane factor (OMF) (TC 1.B.17) family.

The protein resides in the cell outer membrane. In terms of biological role, the outer membrane component of a constitutive organic solvent efflux system. Is involved in export of toluene, styrene, m-xylene, propylbenzene and ethylbenzene. Also exports AMP and the antibiotics carbenicillin, nalidixic acid, chloramphenicol and tetracycline. The protein is Toluene efflux pump outer membrane protein TtgC (ttgC) of Pseudomonas putida (strain DOT-T1E).